Consider the following 131-residue polypeptide: MDPRLPAWALVLLGPALVFALGPAPTPEMREKLCGHHFVRALVRVCGGPRWSTEARRPATGGDRELLQWLERRHLLHGLVADSNLTLGPGLQPLPQTSHHHRHHRAAATNPARYCCLSGCTQQDLLTLCPY.

Positions 1 to 20 (MDPRLPAWALVLLGPALVFA) are cleaved as a signal peptide. Disulfide bonds link Cys-34–Cys-116, Cys-46–Cys-129, and Cys-115–Cys-120. Residues 58-104 (PATGGDRELLQWLERRHLLHGLVADSNLTLGPGLQPLPQTSHHHRHH) constitute a propeptide, c peptide like.

The protein belongs to the insulin family. In terms of assembly, heterodimer of a B chain and an A chain linked by two disulfide bonds. In terms of tissue distribution, expressed in prenatal and postnatal Leydig cells. Found as well in the corpus luteum, trophoblast, fetal membranes and breast.

The protein resides in the secreted. Its function is as follows. Seems to play a role in testicular function. May be a trophic hormone with a role in testicular descent in fetal life. Is a ligand for LGR8 receptor. This is Insulin-like 3 (INSL3) from Homo sapiens (Human).